A 482-amino-acid polypeptide reads, in one-letter code: UDP-glycosyltransferase 86A2 (482 aa).

UDP-alpha-D-glucose contacts are provided by residues S297, 355–357 (CCQ), 372–380 (HCGWNSILE), and 394–397 (LTDQ).

It belongs to the UDP-glycosyltransferase family.

This Arabidopsis thaliana (Mouse-ear cress) protein is UDP-glycosyltransferase 86A2 (UGT86A2).